Here is a 469-residue protein sequence, read N- to C-terminus: 3-isopropylmalate dehydratase large subunit (469 aa).

[4Fe-4S] cluster is bound by residues Cys-347, Cys-408, and Cys-411.

It belongs to the aconitase/IPM isomerase family. LeuC type 1 subfamily. Heterodimer of LeuC and LeuD. Requires [4Fe-4S] cluster as cofactor.

It carries out the reaction (2R,3S)-3-isopropylmalate = (2S)-2-isopropylmalate. The protein operates within amino-acid biosynthesis; L-leucine biosynthesis; L-leucine from 3-methyl-2-oxobutanoate: step 2/4. In terms of biological role, catalyzes the isomerization between 2-isopropylmalate and 3-isopropylmalate, via the formation of 2-isopropylmaleate. This is 3-isopropylmalate dehydratase large subunit from Actinobacillus succinogenes (strain ATCC 55618 / DSM 22257 / CCUG 43843 / 130Z).